The chain runs to 295 residues: GTPase Era (295 aa).

The Era-type G domain occupies 4–171 (KSGFVTIIGR…INLIVQYLPE (168 aa)). Positions 12–19 (GRPNVGKS) are G1. 12 to 19 (GRPNVGKS) is a binding site for GTP. Residues 38-42 (QTTRN) form a G2 region. Residues 59 to 62 (DTPG) are G3. GTP is bound by residues 59–63 (DTPGI) and 121–124 (NKID). The G4 stretch occupies residues 121-124 (NKID). The interval 150–152 (ISA) is G5. The KH type-2 domain occupies 194–280 (IREKILHYTD…YLELWVKVKE (87 aa)).

Belongs to the TRAFAC class TrmE-Era-EngA-EngB-Septin-like GTPase superfamily. Era GTPase family. Monomer.

It localises to the cytoplasm. The protein resides in the cell membrane. In terms of biological role, an essential GTPase that binds both GDP and GTP, with rapid nucleotide exchange. Plays a role in 16S rRNA processing and 30S ribosomal subunit biogenesis and possibly also in cell cycle regulation and energy metabolism. The polypeptide is GTPase Era (Alkaliphilus oremlandii (strain OhILAs) (Clostridium oremlandii (strain OhILAs))).